We begin with the raw amino-acid sequence, 263 residues long: Indolethylamine N-methyltransferase (263 aa).

Position 13 is an N6-succinyllysine (Lys-13). S-adenosyl-L-methionine contacts are provided by residues Tyr-20, Tyr-25, Gly-63–Ser-64, Tyr-69, Asp-85, and Asn-90. Lys-96 carries the N6-succinyllysine modification. Residues Asp-142–Ala-143 and Leu-163 each bind S-adenosyl-L-methionine.

It belongs to the class I-like SAM-binding methyltransferase superfamily. NNMT/PNMT/TEMT family. In terms of assembly, monomer. As to expression, highly expressed in lung, also detected in liver and at very low levels in brain.

The protein resides in the cytoplasm. It carries out the reaction a tertiary amine + S-adenosyl-L-methionine = a methylated tertiary amine + S-adenosyl-L-homocysteine + H(+). The enzyme catalyses a secondary amine + S-adenosyl-L-methionine = a methylated secondary amine + S-adenosyl-L-homocysteine + H(+). It catalyses the reaction a primary amine + S-adenosyl-L-methionine = a methylated primary amine + S-adenosyl-L-homocysteine + H(+). The catalysed reaction is dimethyl sulfide + S-adenosyl-L-methionine = trimethylsulfonium + S-adenosyl-L-homocysteine. In terms of biological role, catalyzes the N-methylation of tryptamine and structurally related compounds. Functions as a thioether S-methyltransferase and is active with a variety of thioethers and the corresponding selenium and tellurium compounds, including 3-methylthiopropionaldehyde, dimethyl selenide, dimethyl telluride, 2-methylthioethylamine, 2-methylthioethanol, methyl-n-propyl sulfide and diethyl sulfide. Plays an important role in the detoxification of selenium compounds. The polypeptide is Indolethylamine N-methyltransferase (INMT) (Oryctolagus cuniculus (Rabbit)).